Here is a 67-residue protein sequence, read N- to C-terminus: Small ribosomal subunit protein bS21 (67 aa).

Belongs to the bacterial ribosomal protein bS21 family.

In Magnetococcus marinus (strain ATCC BAA-1437 / JCM 17883 / MC-1), this protein is Small ribosomal subunit protein bS21.